Consider the following 101-residue polypeptide: Pro-corazonin (101 aa).

A signal peptide spans 1 to 19 (MVTNITLILTLMTLASVTA). Gln20 is subject to Pyrrolidone carboxylic acid. Asn30 carries the post-translational modification Asparagine amide.

The protein belongs to the corazonin family.

The protein resides in the secreted. Its function is as follows. Cardioactive peptide. Corazonin is probably involved in the physiological regulation of the heart beat. The chain is Pro-corazonin (crz) from Bombyx mori (Silk moth).